A 190-amino-acid polypeptide reads, in one-letter code: MTVGVLALQGAFIEHETMLQGLGVATLQVRLPEQLVQVERLIIPGGESTTIGKLLVRFDLLEPIQQRAAEGMPIWGTCAGMILLAKEIAEGRVEGQPALGLMDITARRNAFGRQVDSFETNLQVPVLGEAPFHAVFIRAPQIDKVGEAVETLASLDDGRIVAARQGKLLATAFHPELTGDARFHELFLGL.

46–48 (GES) contacts L-glutamine. Cysteine 78 serves as the catalytic Nucleophile. L-glutamine-binding positions include arginine 108 and 137-138 (IR). Residues histidine 174 and glutamate 176 each act as charge relay system in the active site.

The protein belongs to the glutaminase PdxT/SNO family. In terms of assembly, in the presence of PdxS, forms a dodecamer of heterodimers. Only shows activity in the heterodimer.

It carries out the reaction aldehydo-D-ribose 5-phosphate + D-glyceraldehyde 3-phosphate + L-glutamine = pyridoxal 5'-phosphate + L-glutamate + phosphate + 3 H2O + H(+). It catalyses the reaction L-glutamine + H2O = L-glutamate + NH4(+). It participates in cofactor biosynthesis; pyridoxal 5'-phosphate biosynthesis. Its function is as follows. Catalyzes the hydrolysis of glutamine to glutamate and ammonia as part of the biosynthesis of pyridoxal 5'-phosphate. The resulting ammonia molecule is channeled to the active site of PdxS. The chain is Pyridoxal 5'-phosphate synthase subunit PdxT from Herpetosiphon aurantiacus (strain ATCC 23779 / DSM 785 / 114-95).